The primary structure comprises 160 residues: Succinate dehydrogenase assembly factor 2-A, mitochondrial (160 aa).

The N-terminal 30 residues, 1-30, are a transit peptide targeting the mitochondrion; the sequence is MLRQLKLTLNISRWIFMPWQRQASASSSQV.

This sequence belongs to the SDHAF2 family. Interacts with the flavoprotein subunit within the SDH catalytic dimer.

The protein resides in the mitochondrion matrix. Plays an essential role in the assembly of succinate dehydrogenase (SDH), an enzyme complex (also referred to as respiratory complex II) that is a component of both the tricarboxylic acid (TCA) cycle and the mitochondrial electron transport chain, and which couples the oxidation of succinate to fumarate with the reduction of ubiquinone (coenzyme Q) to ubiquinol. Required for flavinylation (covalent attachment of FAD) of the flavoprotein subunit of the SDH catalytic dimer. The polypeptide is Succinate dehydrogenase assembly factor 2-A, mitochondrial (Drosophila persimilis (Fruit fly)).